Reading from the N-terminus, the 337-residue chain is Probable dual-specificity RNA methyltransferase RlmN (337 aa).

Glu88 serves as the catalytic Proton acceptor. The Radical SAM core domain occupies 94–324 (SEKRLTVCVS…VRYSRGLATD (231 aa)). A disulfide bridge connects residues Cys101 and Cys327. [4Fe-4S] cluster contacts are provided by Cys108, Cys112, and Cys115. S-adenosyl-L-methionine-binding positions include 155 to 156 (GE), Ser185, 208 to 210 (SLH), and Asn284. The active-site S-methylcysteine intermediate is Cys327.

This sequence belongs to the radical SAM superfamily. RlmN family. Requires [4Fe-4S] cluster as cofactor.

The protein localises to the cytoplasm. It carries out the reaction adenosine(2503) in 23S rRNA + 2 reduced [2Fe-2S]-[ferredoxin] + 2 S-adenosyl-L-methionine = 2-methyladenosine(2503) in 23S rRNA + 5'-deoxyadenosine + L-methionine + 2 oxidized [2Fe-2S]-[ferredoxin] + S-adenosyl-L-homocysteine. The enzyme catalyses adenosine(37) in tRNA + 2 reduced [2Fe-2S]-[ferredoxin] + 2 S-adenosyl-L-methionine = 2-methyladenosine(37) in tRNA + 5'-deoxyadenosine + L-methionine + 2 oxidized [2Fe-2S]-[ferredoxin] + S-adenosyl-L-homocysteine. In terms of biological role, specifically methylates position 2 of adenine 2503 in 23S rRNA and position 2 of adenine 37 in tRNAs. The protein is Probable dual-specificity RNA methyltransferase RlmN of Microcystis aeruginosa (strain NIES-843 / IAM M-2473).